The sequence spans 467 residues: Chromosomal replication initiator protein DnaA (467 aa).

The domain I, interacts with DnaA modulators stretch occupies residues 1–85; the sequence is MSLSLWQQCL…FEVGAKPASS (85 aa). Residues 85–130 form a domain II region; the sequence is SLQKGAVSPAAAAIPAAQVQTARVAPTIVRPGWDNVPAPAEPTYRS. Residues 131 to 347 are domain III, AAA+ region; sequence NVNVKHTFDN…GALNRVIANA (217 aa). Residues glycine 175, glycine 177, lysine 178, and threonine 179 each coordinate ATP. A domain IV, binds dsDNA region spans residues 348–467; sequence NFTGRAITID…FSNLIRTLSS (120 aa).

The protein belongs to the DnaA family. In terms of assembly, oligomerizes as a right-handed, spiral filament on DNA at oriC.

The protein localises to the cytoplasm. In terms of biological role, plays an essential role in the initiation and regulation of chromosomal replication. ATP-DnaA binds to the origin of replication (oriC) to initiate formation of the DNA replication initiation complex once per cell cycle. Binds the DnaA box (a 9 base pair repeat at the origin) and separates the double-stranded (ds)DNA. Forms a right-handed helical filament on oriC DNA; dsDNA binds to the exterior of the filament while single-stranded (ss)DNA is stabiized in the filament's interior. The ATP-DnaA-oriC complex binds and stabilizes one strand of the AT-rich DNA unwinding element (DUE), permitting loading of DNA polymerase. After initiation quickly degrades to an ADP-DnaA complex that is not apt for DNA replication. Binds acidic phospholipids. In Klebsiella pneumoniae (strain 342), this protein is Chromosomal replication initiator protein DnaA.